Here is a 354-residue protein sequence, read N- to C-terminus: Probable L-ascorbate-6-phosphate lactonase UlaG (354 aa).

It belongs to the UlaG family. A divalent metal cation is required as a cofactor.

The protein localises to the cytoplasm. The catalysed reaction is L-ascorbate 6-phosphate + H2O = 3-dehydro-L-gulonate 6-phosphate. The protein operates within cofactor degradation; L-ascorbate degradation; D-xylulose 5-phosphate from L-ascorbate: step 1/4. Probably catalyzes the hydrolysis of L-ascorbate-6-P into 3-keto-L-gulonate-6-P. Is essential for L-ascorbate utilization under anaerobic conditions. The sequence is that of Probable L-ascorbate-6-phosphate lactonase UlaG from Salmonella gallinarum (strain 287/91 / NCTC 13346).